Consider the following 226-residue polypeptide: UPF0758 protein GWCH70_2550 (226 aa).

In terms of domain architecture, MPN spans 104-226 (VIRSPEDGAK…FVSLKEKGYV (123 aa)). Zn(2+) contacts are provided by histidine 175, histidine 177, and aspartate 188. Positions 175–188 (HNHPSGDPTPSRED) match the JAMM motif motif.

Belongs to the UPF0758 family.

The polypeptide is UPF0758 protein GWCH70_2550 (Geobacillus sp. (strain WCH70)).